Reading from the N-terminus, the 151-residue chain is Neuroglobin (151 aa).

The 149-residue stretch at 1 to 149 (MERPEHELIR…VVQAMSRGWN (149 aa)) folds into the Globin domain. The heme b site is built by His64 and His96.

It belongs to the globin family. As to quaternary structure, monomer. Homodimer and homotetramer; disulfide-linked. Mainly monomeric but also detected as part of homodimers and homotetramers. Interacts with 14-3-3 proteins; regulates the phosphorylation of NGB. Could interact (ferrous form) with G-alpha(i) proteins (GTP-bound form). Post-translationally, phosphorylated during hypoxia by ERK1/ERK2. Phosphorylation regulates the heme pocket hexacoordination preventing the association of His-64 with the heme metal center. Thereby, promotes the access of dioxygen and nitrite to the heme and stimulates the nitrite reductase activity. Phosphorylation during hypoxia is stabilized by 14-3-3 proteins.

Its subcellular location is the cytoplasm. The protein resides in the cytosol. It is found in the mitochondrion matrix. The catalysed reaction is Fe(III)-heme b-[protein] + nitric oxide + H2O = Fe(II)-heme b-[protein] + nitrite + 2 H(+). Monomeric globin with a bis-histidyl six-coordinate heme-iron atom through which it can bind dioxygen, carbon monoxide and nitric oxide. Could help transport oxygen and increase its availability to the metabolically active neuronal tissues, though its low quantity in tissues as well as its high affinity for dioxygen, which may limit its oxygen-releasing ability, argue against it. The ferrous/deoxygenated form exhibits a nitrite reductase activity and it could produce nitric oxide which in turn inhibits cellular respiration in response to hypoxia. In its ferrous/deoxygenated state, it may also exhibit GDI (Guanine nucleotide Dissociation Inhibitor) activity toward heterotrimeric G-alpha proteins, thereby regulating signal transduction to facilitate neuroprotective responses in the wake of hypoxia and associated oxidative stress. The chain is Neuroglobin from Sus scrofa (Pig).